The primary structure comprises 272 residues: Serine/arginine-rich splicing factor 5 (272 aa).

The RRM 1 domain maps to 4–74 (CRVFIGRLNP…ERVTIEHARA (71 aa)). The tract at residues 73 to 105 (RARSRGGRGRGRYSDRFSSRRPRNDRRNAPPVR) is disordered. Over residues 74 to 83 (ARSRGGRGRG) the composition is skewed to basic residues. Position 86 is a phosphoserine (serine 86). The 74-residue stretch at 108–181 (NRLIVENLSS…RKIKLIEGSK (74 aa)) folds into the RRM 2 domain. N6-acetyllysine is present on lysine 167. The disordered stretch occupies residues 174–272 (IKLIEGSKRH…SRSRSVDSGN (99 aa)). The segment covering 182–229 (RHSRSRSRSRSRTRSSSRSRSRSRSRSRKSYSRSRSRSRSRSRSKSRS) has biased composition (basic residues). Phosphoserine is present on residues serine 227, serine 229, serine 233, serine 250, and serine 253. Positions 242 to 254 (RGSSSRSKSPASV) are enriched in low complexity.

It belongs to the splicing factor SR family. As to quaternary structure, interacts (via RS domain) with PHF5A (via N-terminus). Found in a pre-mRNA splicing complex with SRSF4/SFRS4, SRSF5/SFRS5, SNRNP70, SNRPA1, SRRM1 and SRRM2. Extensively phosphorylated on serine residues in the RS domain.

It localises to the nucleus. In terms of biological role, plays a role in constitutive splicing and can modulate the selection of alternative splice sites. The sequence is that of Serine/arginine-rich splicing factor 5 (SRSF5) from Homo sapiens (Human).